The following is a 351-amino-acid chain: Biotin synthase (351 aa).

The 226-residue stretch at Pro73–Arg298 folds into the Radical SAM core domain. [4Fe-4S] cluster contacts are provided by Cys88, Cys92, and Cys95. [2Fe-2S] cluster-binding residues include Cys131, Cys164, Cys223, and Arg293.

This sequence belongs to the radical SAM superfamily. Biotin synthase family. Homodimer. [4Fe-4S] cluster serves as cofactor. Requires [2Fe-2S] cluster as cofactor.

The catalysed reaction is (4R,5S)-dethiobiotin + (sulfur carrier)-SH + 2 reduced [2Fe-2S]-[ferredoxin] + 2 S-adenosyl-L-methionine = (sulfur carrier)-H + biotin + 2 5'-deoxyadenosine + 2 L-methionine + 2 oxidized [2Fe-2S]-[ferredoxin]. It participates in cofactor biosynthesis; biotin biosynthesis; biotin from 7,8-diaminononanoate: step 2/2. Functionally, catalyzes the conversion of dethiobiotin (DTB) to biotin by the insertion of a sulfur atom into dethiobiotin via a radical-based mechanism. The chain is Biotin synthase from Frankia alni (strain DSM 45986 / CECT 9034 / ACN14a).